Reading from the N-terminus, the 430-residue chain is Tol-Pal system protein TolB (430 aa).

The signal sequence occupies residues 1-21 (MKQALRVAFGFLMLWAAVLHA).

This sequence belongs to the TolB family. In terms of assembly, the Tol-Pal system is composed of five core proteins: the inner membrane proteins TolA, TolQ and TolR, the periplasmic protein TolB and the outer membrane protein Pal. They form a network linking the inner and outer membranes and the peptidoglycan layer.

It is found in the periplasm. Part of the Tol-Pal system, which plays a role in outer membrane invagination during cell division and is important for maintaining outer membrane integrity. TolB occupies a key intermediary position in the Tol-Pal system because it communicates directly with both membrane-embedded components, Pal in the outer membrane and TolA in the inner membrane. In Salmonella typhi, this protein is Tol-Pal system protein TolB.